The following is a 462-amino-acid chain: Nuclear factor interleukin-3-regulated protein (462 aa).

Lys24 is covalently cross-linked (Glycyl lysine isopeptide (Lys-Gly) (interchain with G-Cter in SUMO2)). A bZIP domain is found at 73–136; that stretch reads DAMYWEKRRK…GLISSTAYAQ (64 aa). Residues 79 to 95 are basic motif; the sequence is KRRKNNEAAKRSREKRR. Residues 99–106 are leucine-zipper; it reads LVLENKLI. Disordered stretches follow at residues 189-236 and 254-303; these read DVSE…RDDR and GYSH…HSPV. Lys214 participates in a covalent cross-link: Glycyl lysine isopeptide (Lys-Gly) (interchain with G-Cter in SUMO2). Lys219 is covalently cross-linked (Glycyl lysine isopeptide (Lys-Gly) (interchain with G-Cter in SUMO1); alternate). Residue Lys219 forms a Glycyl lysine isopeptide (Lys-Gly) (interchain with G-Cter in SUMO2); alternate linkage. Basic and acidic residues predominate over residues 227 to 236; it reads SYAREPRDDR. Over residues 264–274 the composition is skewed to polar residues; that stretch reads VNRSSSNSPRT. Position 301 is a phosphoserine (Ser301). Residues Lys314, Lys326, Lys332, Lys337, and Lys350 each participate in a glycyl lysine isopeptide (Lys-Gly) (interchain with G-Cter in SUMO2) cross-link. Phosphoserine is present on Ser353. Residues Lys360, Lys394, Lys401, Lys406, Lys412, Lys419, Lys424, Lys434, and Lys448 each participate in a glycyl lysine isopeptide (Lys-Gly) (interchain with G-Cter in SUMO2) cross-link.

This sequence belongs to the bZIP family. NFIL3 subfamily. In terms of assembly, homodimer. Binds DNA as a dimer. Interacts with CRY2, DR1 and PER2. Interacts with NR0B2. Interacts with MYSM1.

It localises to the nucleus. Functionally, acts as a transcriptional regulator that recognizes and binds to the sequence 5'-[GA]TTA[CT]GTAA[CT]-3', a sequence present in many cellular and viral promoters. Represses transcription from promoters with activating transcription factor (ATF) sites. Represses promoter activity in osteoblasts. Represses transcriptional activity of PER1. Represses transcriptional activity of PER2 via the B-site on the promoter. Activates transcription from the interleukin-3 promoter in T-cells. Competes for the same consensus-binding site with PAR DNA-binding factors (DBP, HLF and TEF). Component of the circadian clock that acts as a negative regulator for the circadian expression of PER2 oscillation in the cell-autonomous core clock. Protects pro-B cells from programmed cell death. Represses the transcription of CYP2A5. Positively regulates the expression and activity of CES2 by antagonizing the repressive action of NR1D1 on CES2. Required for the development of natural killer cell precursors. This chain is Nuclear factor interleukin-3-regulated protein (NFIL3), found in Bos taurus (Bovine).